Here is a 618-residue protein sequence, read N- to C-terminus: MALLSITPLVSRSCLSSSHEIKALRRTIPTLGICRPGKSVAHSINMCLTSVASTDSVQRRVGNYHSNLWDDDFIQSLISTPYGAPDYRERADRLIGEVKDIMFNFKSLEDGGNDLLQRLLLVDDVERLGIDRHFKKEIKTALDYVNSYWNEKGIGCGRESVVTDLNSTALGLRTLRLHGYTVSSDVLNVFKDKNGQFSSTANIQIEGEIRGVLNLFRASLVAFPGEKVMDEAETFSTKYLREALQKIPASSILSLEIRDVLEYGWHTNLPRLEARNYMDVFGQHTKNKNAAEKLLELAKLEFNIFHSLQERELKHVSRWWKDSGSPEMTFCRHRHVEYYALASCIAFEPQHSGFRLGFTKMSHLITVLDDMYDVFGTVDELELFTATIKRWDPSAMECLPEYMKGVYMMVYHTVNEMARVAEKAQGRDTLNYARQAWEACFDSYMQEAKWIATGYLPTFEEYLENGKVSSAHRPCALQPILTLDIPFPDHILKEVDFPSKLNDLICIILRLRGDTRCYKADRARGEEASSISCYMKDNPGLTEEDALNHINFMIRDAIRELNWELLKPDNSVPITSKKHAFDISRVWHHGYRYRDGYSFANVETKSLVMRTVIEPVPL.

The transit peptide at 1–51 directs the protein to the chloroplast; sequence MALLSITPLVSRSCLSSSHEIKALRRTIPTLGICRPGKSVAHSINMCLTSV. The Mg(2+) site is built by Asp369, Asp373, and Asp521. The DDXXD motif motif lies at 369–373; sequence DDMYD.

This sequence belongs to the terpene synthase family. Tpsd subfamily. Mg(2+) serves as cofactor. It depends on Mn(2+) as a cofactor. Requires K(+) as cofactor.

The protein resides in the plastid. It is found in the chloroplast. The catalysed reaction is (2E)-geranyl diphosphate = (1S,4R)-camphene + diphosphate. Its pathway is terpene metabolism; oleoresin biosynthesis. Its function is as follows. Involved in defensive oleoresin formation in conifers in response to insect attack or other injury. Involved in monoterpene (C10) olefins biosynthesis. The sequence is that of Camphene synthase, chloroplastic (ag6) from Abies grandis (Grand fir).